We begin with the raw amino-acid sequence, 332 residues long: Transaldolase (332 aa).

The active-site Schiff-base intermediate with substrate is Lys136.

Belongs to the transaldolase family. Type 1 subfamily.

The protein localises to the cytoplasm. The catalysed reaction is D-sedoheptulose 7-phosphate + D-glyceraldehyde 3-phosphate = D-erythrose 4-phosphate + beta-D-fructose 6-phosphate. It participates in carbohydrate degradation; pentose phosphate pathway; D-glyceraldehyde 3-phosphate and beta-D-fructose 6-phosphate from D-ribose 5-phosphate and D-xylulose 5-phosphate (non-oxidative stage): step 2/3. Transaldolase is important for the balance of metabolites in the pentose-phosphate pathway. This chain is Transaldolase, found in Trichormus variabilis (strain ATCC 29413 / PCC 7937) (Anabaena variabilis).